Here is a 319-residue protein sequence, read N- to C-terminus: Aminoimidazole riboside kinase (319 aa).

The 5-amino-1-(beta-D-ribosyl)imidazole site is built by Asp16, Gly31, and Tyr101. ATP is bound at residue 158 to 160 (DVN). Arg162 contributes to the 5-amino-1-(beta-D-ribosyl)imidazole binding site. Residues Ala180, Ala181, and Ala183 each contribute to the K(+) site. Residues Lys187 and Glu192 each coordinate ATP. Gly213 is a binding site for K(+). 220–225 (SLGADG) contacts ATP. The K(+) site is built by Asp246 and Thr248. Asp252 is a 5-amino-1-(beta-D-ribosyl)imidazole binding site. Asp252 serves as the catalytic Proton acceptor. Residue Asn281 participates in ATP binding. K(+)-binding residues include Ala287, Ala290, and Gly292.

Belongs to the carbohydrate kinase PfkB family. Homodimer.

It carries out the reaction 5-amino-1-(beta-D-ribosyl)imidazole + ATP = 5-amino-1-(5-phospho-beta-D-ribosyl)imidazole + ADP + H(+). Its activity is regulated as follows. Potassium may regulate kinase activity. Phosphorylates 5-amino-1-(beta-D-ribosyl)imidazole (AIRs) to form 5-amino-1-(5-phospho-beta-D-ribosyl)imidazole (AIR), an important intermediate in the purine and thiamine biosynthetic pathways. It allows the use of exogenous aminoimidazole riboside (AIRs) to satisfy the cellular requirement for purines and thiamine. This Salmonella typhimurium (strain LT2 / SGSC1412 / ATCC 700720) protein is Aminoimidazole riboside kinase.